A 325-amino-acid polypeptide reads, in one-letter code: Protein TMED8 (325 aa).

The interval 1 to 78 (MSDLQAAEGP…MVSPVSKDAT (78 aa)) is disordered. The GOLD domain maps to 159–323 (PPCIWTFAKV…NKTLYFHIYY (165 aa)). Lysine 169 is subject to N6-acetyllysine. The disordered stretch occupies residues 232–267 (TVQVSDSSDDEDEEEEEEEEIEEPVPAGDVERGSRS). Residues 238–254 (SSDDEDEEEEEEEEIEE) are compositionally biased toward acidic residues.

This is Protein TMED8 (TMED8) from Homo sapiens (Human).